The primary structure comprises 430 residues: tRNA(Ile)-lysidine synthase (430 aa).

21 to 26 lines the ATP pocket; sequence SGGLDS.

This sequence belongs to the tRNA(Ile)-lysidine synthase family.

It localises to the cytoplasm. It catalyses the reaction cytidine(34) in tRNA(Ile2) + L-lysine + ATP = lysidine(34) in tRNA(Ile2) + AMP + diphosphate + H(+). Ligates lysine onto the cytidine present at position 34 of the AUA codon-specific tRNA(Ile) that contains the anticodon CAU, in an ATP-dependent manner. Cytidine is converted to lysidine, thus changing the amino acid specificity of the tRNA from methionine to isoleucine. This chain is tRNA(Ile)-lysidine synthase, found in Salmonella paratyphi B (strain ATCC BAA-1250 / SPB7).